The following is a 300-amino-acid chain: N-acetylmuramic acid 6-phosphate etherase (300 aa).

The SIS domain maps to 57-220; it reads IAVAFQCGGR…TTGAMIRTGK (164 aa). The Proton donor role is filled by glutamate 85. Glutamate 116 is an active-site residue.

This sequence belongs to the GCKR-like family. MurNAc-6-P etherase subfamily. As to quaternary structure, homodimer.

The catalysed reaction is N-acetyl-D-muramate 6-phosphate + H2O = N-acetyl-D-glucosamine 6-phosphate + (R)-lactate. The protein operates within amino-sugar metabolism; 1,6-anhydro-N-acetylmuramate degradation. Its pathway is amino-sugar metabolism; N-acetylmuramate degradation. It functions in the pathway cell wall biogenesis; peptidoglycan recycling. Its function is as follows. Specifically catalyzes the cleavage of the D-lactyl ether substituent of MurNAc 6-phosphate, producing GlcNAc 6-phosphate and D-lactate. Together with AnmK, is also required for the utilization of anhydro-N-acetylmuramic acid (anhMurNAc) either imported from the medium or derived from its own cell wall murein, and thus plays a role in cell wall recycling. This chain is N-acetylmuramic acid 6-phosphate etherase, found in Aliivibrio salmonicida (strain LFI1238) (Vibrio salmonicida (strain LFI1238)).